Here is a 374-residue protein sequence, read N- to C-terminus: tRNA-specific 2-thiouridylase MnmA (374 aa).

Residues 17–24 (GMSGGVDS) and Met-43 each bind ATP. Residues 103–105 (NPD) form an interaction with target base in tRNA region. Cys-108 functions as the Nucleophile in the catalytic mechanism. An intrachain disulfide couples Cys-108 to Cys-204. Gly-132 serves as a coordination point for ATP. The interval 154–156 (KDQ) is interaction with tRNA. Cys-204 serves as the catalytic Cysteine persulfide intermediate. The interaction with tRNA stretch occupies residues 316-317 (RY).

The protein belongs to the MnmA/TRMU family.

The protein localises to the cytoplasm. The enzyme catalyses S-sulfanyl-L-cysteinyl-[protein] + uridine(34) in tRNA + AH2 + ATP = 2-thiouridine(34) in tRNA + L-cysteinyl-[protein] + A + AMP + diphosphate + H(+). In terms of biological role, catalyzes the 2-thiolation of uridine at the wobble position (U34) of tRNA, leading to the formation of s(2)U34. This Pseudomonas fluorescens (strain Pf0-1) protein is tRNA-specific 2-thiouridylase MnmA.